The primary structure comprises 117 residues: SPbeta prophage-derived uncharacterized protein YosL (117 aa).

The polypeptide is SPbeta prophage-derived uncharacterized protein YosL (yosL) (Bacillus subtilis (strain 168)).